Consider the following 163-residue polypeptide: Cyclic pyranopterin monophosphate synthase (163 aa).

Substrate is bound by residues 74–76 and 111–112; these read MCH and ME. Aspartate 126 is an active-site residue.

It belongs to the MoaC family. In terms of assembly, homohexamer; trimer of dimers.

The enzyme catalyses (8S)-3',8-cyclo-7,8-dihydroguanosine 5'-triphosphate = cyclic pyranopterin phosphate + diphosphate. Its pathway is cofactor biosynthesis; molybdopterin biosynthesis. In terms of biological role, catalyzes the conversion of (8S)-3',8-cyclo-7,8-dihydroguanosine 5'-triphosphate to cyclic pyranopterin monophosphate (cPMP). The sequence is that of Cyclic pyranopterin monophosphate synthase from Desulfitobacterium hafniense (strain DSM 10664 / DCB-2).